A 209-amino-acid polypeptide reads, in one-letter code: Kynurenine formamidase (209 aa).

Residue Trp-18 coordinates substrate. Zn(2+) is bound by residues His-48, His-52, and Asp-54. Residue His-58 is the Proton donor/acceptor of the active site. Residues His-160 and Glu-172 each contribute to the Zn(2+) site.

This sequence belongs to the Cyclase 1 superfamily. KynB family. In terms of assembly, homodimer. It depends on Zn(2+) as a cofactor.

The catalysed reaction is N-formyl-L-kynurenine + H2O = L-kynurenine + formate + H(+). It participates in amino-acid degradation; L-tryptophan degradation via kynurenine pathway; L-kynurenine from L-tryptophan: step 2/2. Catalyzes the hydrolysis of N-formyl-L-kynurenine to L-kynurenine, the second step in the kynurenine pathway of tryptophan degradation. This Paraburkholderia phymatum (strain DSM 17167 / CIP 108236 / LMG 21445 / STM815) (Burkholderia phymatum) protein is Kynurenine formamidase.